A 126-amino-acid polypeptide reads, in one-letter code: uncharacterized protein (126 aa).

This is an uncharacterized protein from Acanthamoeba polyphaga mimivirus (APMV).